The sequence spans 858 residues: Zinc finger protein ZXDC (858 aa).

Disordered regions lie at residues 1–127 (MDLP…APAG) and 151–174 (PGPA…STPG). Low complexity-rich tracts occupy residues 23 to 35 (PLRR…GASP), 84 to 97 (GGAA…QEAE), and 151 to 171 (PGPA…SGPS). Phosphoserine is present on Ser-34. Thr-172 bears the Phosphothreonine mark. 10 consecutive C2H2-type zinc fingers follow at residues 175–199 (YRCP…LLTH), 208–232 (FKCP…LQSH), 238–262 (FGCP…MKGH), 268–290 (FKCE…QRSH), 297–321 (YKCD…NRAH), 328–352 (FSCS…LRSH), 358–382 (FICD…RRKH), 388–412 (FTCP…SITH), 418–442 (FECP…SKKH), and 451–476 (SRCP…VRQH). The tract at residues 579–688 (DSPLVLGTAA…HGLPQSTLPS (110 aa)) is required for transcriptional activation. Residue Lys-660 forms a Glycyl lysine isopeptide (Lys-Gly) (interchain with G-Cter in SUMO) linkage. Disordered regions lie at residues 660 to 696 (KVEP…HGAQ), 726 to 756 (KEKK…SPPH), and 837 to 858 (GGPA…QDLQ). The residue at position 665 (Ser-665) is a Phosphoserine. Over residues 675 to 687 (QEGSHGLPQSTLP) the composition is skewed to polar residues. The interval 781-858 (PAAGVQCGAQ…GSTINLQDLQ (78 aa)) is interaction with CIITA. The span at 847–858 (FPGSTINLQDLQ) shows a compositional bias: polar residues.

It belongs to the ZXD family. As to quaternary structure, self-associates. Interacts with ZXDA and CIITA. In terms of processing, sumoylated at Lys-660 with SUMO1, SUMO2 and SUMO3; sumoylation enhances the activity of the transcriptional activation domain. As to expression, expressed at high levels in heart, kidney, liver and testis, at moderate levels in brain and stomach, and at low levels in lung, muscle, placenta, small intestine and spleen.

Its subcellular location is the nucleus. Functionally, cooperates with CIITA to promote transcription of MHC class I and MHC class II genes. In Homo sapiens (Human), this protein is Zinc finger protein ZXDC (ZXDC).